A 278-amino-acid chain; its full sequence is Undecaprenyl-diphosphatase (278 aa).

8 helical membrane passes run 14-34, 40-60, 89-109, 121-141, 153-173, 196-216, 227-247, and 257-277; these read GTTEFLPISSSAHLIVLPWLF, GLAFNVALHLGTLSAVLAYFW, WAVIIGSLPAGLAGFFLNDVI, TAIVFTSLLLIVLGFVLWLAE, LGLRDGLVVGLAQALALLPGV, FSFILGIPAIAGAGLLETLKL, VLFVTGVASAAITGFLAIAFL, and SIFIVYRIALGLVLLLVVSFA.

It belongs to the UppP family.

It localises to the cell membrane. It catalyses the reaction di-trans,octa-cis-undecaprenyl diphosphate + H2O = di-trans,octa-cis-undecaprenyl phosphate + phosphate + H(+). Catalyzes the dephosphorylation of undecaprenyl diphosphate (UPP). Confers resistance to bacitracin. This is Undecaprenyl-diphosphatase from Thermomicrobium roseum (strain ATCC 27502 / DSM 5159 / P-2).